Here is an 88-residue protein sequence, read N- to C-terminus: Arminin 1c (88 aa).

The N-terminal stretch at 1–18 (MKPVFVILFLTCIAFTYA) is a signal peptide. Positions 19-57 (ESYEDVKEEIKNEVEREIFEDLEEESDVLDSNVREFNDA) are excised as a propeptide. The residue at position 85 (V85) is a Valine amide.

It belongs to the arminin family. Expressed in entodermal epithelium along the body column.

The protein resides in the secreted. The protein localises to the target cell membrane. In terms of biological role, antimicrobial peptide with a broad-spectrum antimicrobial activity. Keeps its antibacterial activity under a wide range of salt concentrations that mimic physiological conditions of human blood, which is surprising, since Hydra is an obligate freshwater animal with nearly no salt tolerance. Does not affect red blood cells. This is Arminin 1c from Hydra vulgaris (Hydra).